A 602-amino-acid polypeptide reads, in one-letter code: Elongation factor 4 (602 aa).

The 183-residue stretch at Arg-6–Ala-188 folds into the tr-type G domain. Residues Asp-18 to Thr-23 and Asn-135 to Asp-138 contribute to the GTP site.

Belongs to the TRAFAC class translation factor GTPase superfamily. Classic translation factor GTPase family. LepA subfamily.

The protein resides in the cell membrane. It carries out the reaction GTP + H2O = GDP + phosphate + H(+). In terms of biological role, required for accurate and efficient protein synthesis under certain stress conditions. May act as a fidelity factor of the translation reaction, by catalyzing a one-codon backward translocation of tRNAs on improperly translocated ribosomes. Back-translocation proceeds from a post-translocation (POST) complex to a pre-translocation (PRE) complex, thus giving elongation factor G a second chance to translocate the tRNAs correctly. Binds to ribosomes in a GTP-dependent manner. The protein is Elongation factor 4 of Oceanobacillus iheyensis (strain DSM 14371 / CIP 107618 / JCM 11309 / KCTC 3954 / HTE831).